A 224-amino-acid polypeptide reads, in one-letter code: Charged multivesicular body protein 4b (224 aa).

The interval M1 to Q23 is disordered. S2 is subject to N-acetylserine. K6 is modified (N6-acetyllysine). Residues F8 to G19 are compositionally biased toward gly residues. Residues Q23–I183 are a coiled coil. K114 is subject to N6-acetyllysine. Phosphoserine occurs at positions 184 and 223. Residues G185–M224 are disordered.

Belongs to the SNF7 family. In terms of assembly, probable core component of the endosomal sorting required for transport complex III (ESCRT-III). ESCRT-III components are thought to multimerize to form a flat lattice on the perimeter membrane of the endosome. Several assembly forms of ESCRT-III may exist that interact and act sequentially. Interacts with CHMP6 and CHMP4C. Interacts with PDCD6IP; the interaction is direct. Interacts with VPS4A; the interaction is direct. Interacts with VPS4B; the interaction is direct. Interacts with CHMP7. Interacts with CFTR; the interaction requires misfolded CFTR. Interacts with PTPN23. Interacts with CC2D1B. Post-translationally, ISGylated. Isgylation weakens its interaction with VPS4A. In terms of tissue distribution, widely expressed. Expressed at higher level in heart and skeletal muscle. Also expressed in brain, colon, thymus, spleen, kidney, liver, small intestine, placenta, lung and peripheral blood lymphocytes.

It is found in the cytoplasm. The protein localises to the cytosol. The protein resides in the late endosome membrane. It localises to the midbody. Its subcellular location is the nucleus envelope. Functionally, probable core component of the endosomal sorting required for transport complex III (ESCRT-III) which is involved in multivesicular bodies (MVBs) formation and sorting of endosomal cargo proteins into MVBs. MVBs contain intraluminal vesicles (ILVs) that are generated by invagination and scission from the limiting membrane of the endosome and mostly are delivered to lysosomes enabling degradation of membrane proteins, such as stimulated growth factor receptors, lysosomal enzymes and lipids. The MVB pathway appears to require the sequential function of ESCRT-O, -I,-II and -III complexes. ESCRT-III proteins mostly dissociate from the invaginating membrane before the ILV is released. The ESCRT machinery also functions in topologically equivalent membrane fission events, such as the terminal stages of cytokinesis. Together with SPAST, the ESCRT-III complex promotes nuclear envelope sealing and mitotic spindle disassembly during late anaphase. Plays a role in the endosomal sorting pathway. ESCRT-III proteins are believed to mediate the necessary vesicle extrusion and/or membrane fission activities, possibly in conjunction with the AAA ATPase VPS4. When overexpressed, membrane-assembled circular arrays of CHMP4B filaments can promote or stabilize negative curvature and outward budding. CHMP4A/B/C are required for the exosomal release of SDCBP, CD63 and syndecan. Majority of the protein exists in a folded closed conformation. Its function is as follows. (Microbial infection) The ESCRT machinery also functions in topologically equivalent membrane fission events, such as the budding of enveloped viruses (HIV-1 and other lentiviruses). Via its interaction with PDCD6IP involved in HIV-1 p6- and p9-dependent virus release. This is Charged multivesicular body protein 4b (CHMP4B) from Homo sapiens (Human).